A 124-amino-acid chain; its full sequence is Small ribosomal subunit protein uS12 (124 aa).

The residue at position 89 (Asp89) is a 3-methylthioaspartic acid.

The protein belongs to the universal ribosomal protein uS12 family. As to quaternary structure, part of the 30S ribosomal subunit. Contacts proteins S8 and S17. May interact with IF1 in the 30S initiation complex.

Functionally, with S4 and S5 plays an important role in translational accuracy. Interacts with and stabilizes bases of the 16S rRNA that are involved in tRNA selection in the A site and with the mRNA backbone. Located at the interface of the 30S and 50S subunits, it traverses the body of the 30S subunit contacting proteins on the other side and probably holding the rRNA structure together. The combined cluster of proteins S8, S12 and S17 appears to hold together the shoulder and platform of the 30S subunit. The chain is Small ribosomal subunit protein uS12 from Shewanella sediminis (strain HAW-EB3).